Here is a 206-residue protein sequence, read N- to C-terminus: Transmembrane emp24 domain-containing protein bai (206 aa).

Positions 1–20 are cleaved as a signal peptide; it reads MLKSLLCILLIFGCLCRIHG. At 21–172 the chain is on the lumenal side; it reads VMFHLTPNTQ…RDTNEKTNSR (152 aa). Positions 30 to 140 constitute a GOLD domain; the sequence is QKCLKEDIQA…LKPLEVDLKR (111 aa). Residues 173–193 traverse the membrane as a helical segment; it reads VLFFSIFSMCCLLGLATWQVL. Residues 194 to 206 are Cytoplasmic-facing; it reads YLRRYFKAKKLIE.

This sequence belongs to the EMP24/GP25L family.

It is found in the membrane. In terms of biological role, eca and bai are essential, though not redundant, for dorsoventral patterning of the embryo. Specifically required during early embryogenesis for the activity of maternal tkv, while the zygotic tkv is not affected. The protein is Transmembrane emp24 domain-containing protein bai of Drosophila grimshawi (Hawaiian fruit fly).